The sequence spans 336 residues: Flavonoid 4'-O-methyltransferase 3 (336 aa).

Residues Tyr-140 and Asp-203 each contribute to the S-adenosyl-L-methionine site. His-241 serves as the catalytic Proton acceptor.

Belongs to the class I-like SAM-binding methyltransferase superfamily. Cation-independent O-methyltransferase family. In terms of assembly, homodimer. Expressed in leaves.

It carries out the reaction scutellarein 7-methyl ether + S-adenosyl-L-methionine = ladanein + S-adenosyl-L-homocysteine + H(+). The catalysed reaction is cirsimaritin + S-adenosyl-L-methionine = salvigenin + S-adenosyl-L-homocysteine + H(+). The enzyme catalyses cirsiliol + S-adenosyl-L-methionine = eupatorin + S-adenosyl-L-homocysteine + H(+). It catalyses the reaction genkwanin + S-adenosyl-L-methionine = apigenin 4',7-dimethyl ether + S-adenosyl-L-homocysteine. It functions in the pathway flavonoid metabolism. With respect to regulation, substrate inhibition by genkwanin (GENK) at concentrations above 2.5 mM. Flavonoid 4'-O-methyltransferase involved in the biosynthesis of polymethoxylated flavonoids natural products such as nevadensin and salvigenin, aroma compounds which contribute to the flavor of sweet basil, and exhibit pharmacological activities such as anti-allergic, anti-oxidant, antibacterial, anti-proliferative, and anti-inflammatory effects. Catalyzes S-adenosylmethionine-dependent regioselective 4'-O-methylation of flavonoids; active on various hydroxylated flavonoid substrates, including scutellarein-7-methyl ether (SCU7Me) and cirsimaritin (CIRM), and, with a lower efficiency, hispidulin, ladanein (LAD), cirsioliol (CIRL) and genkwanin (GENK). The polypeptide is Flavonoid 4'-O-methyltransferase 3 (Ocimum basilicum (Sweet basil)).